The sequence spans 200 residues: Transcription elongation factor A protein-like 3 (200 aa).

The segment covering 1–19 (MEEVRGENEGKLEKEGKPE) has biased composition (basic and acidic residues). The interval 1-200 (MEEVRGENEG…QRGLHDIPYL (200 aa)) is disordered. A compositionally biased stretch (acidic residues) spans 20 to 34 (DEVEPEDEEKSDEDE). Position 30 is a phosphoserine (S30). 3 stretches are compositionally biased toward basic and acidic residues: residues 47-85 (GKPE…KPDS), 94-106 (RAAE…DYVP), and 114-153 (DRGT…EELR).

It belongs to the TFS-II family. TFA subfamily.

The protein localises to the nucleus. Its function is as follows. May be involved in transcriptional regulation. The polypeptide is Transcription elongation factor A protein-like 3 (Tceal3) (Mus musculus (Mouse)).